The following is a 2339-amino-acid chain: Voltage-dependent N-type calcium channel subunit alpha-1B (2339 aa).

The disordered stretch occupies residues 1–37; the sequence is MVRFGDELGGRYGGPGGGERARGGGAGGAGGPGPGGL. Topologically, residues 1–90 are cytoplasmic; sequence MVRFGDELGG…DNVVRKYAKR (90 aa). Over residues 10–37 the composition is skewed to gly residues; it reads GRYGGPGGGERARGGGAGGAGGPGPGGL. Residue R22 is modified to Omega-N-methylarginine. The stretch at 82–359 is one I repeat; that stretch reads NVVRKYAKRI…LVLGVLSGEF (278 aa). A helical transmembrane segment spans residues 91–114; that stretch reads ITEWPPFEYMILATIIANCIVLAL. Residues 115–131 lie on the Extracellular side of the membrane; the sequence is EQHLPDGDKTPMSERLD. A helical membrane pass occupies residues 132-152; it reads DTEPYFIGIFCFEAGIKIIAL. At 153–163 the chain is on the cytoplasmic side; sequence GFVFHKGSYLR. The helical transmembrane segment at 164–182 threads the bilayer; it reads NGWNVMDFVVVLTGILATA. At 183–187 the chain is on the extracellular side; it reads GTDFD. A helical transmembrane segment spans residues 188–211; it reads LRTLRAVRVLRPLKLVSGIPSLQV. The Cytoplasmic segment spans residues 212–221; the sequence is VLKSIMKAMV. Residues 222-244 traverse the membrane as a helical segment; the sequence is PLLQIGLLLFFAILMFAIIGLEF. Topologically, residues 245–331 are extracellular; sequence YMGKFHKACF…NTNDAAGNTW (87 aa). A glycan (N-linked (GlcNAc...) asparagine) is linked at N256. A helical transmembrane segment spans residues 332–356; sequence NWLYFIPLIIIGSFFMLNLVLGVLS. The Cytoplasmic segment spans residues 357–482; sequence GEFAKERERV…FFIRRMVKAQ (126 aa). The segment at 379 to 396 is binding to the beta subunit; sequence QQIERELNGYLEWIFKAE. A Phosphoserine modification is found at S411. 451–458 is a binding site for ATP; it reads ASLKSGKT. The II repeat unit spans residues 468 to 712; the sequence is EKMFRFFIRR…VFLAIAVDNL (245 aa). The chain crosses the membrane as a helical span at residues 483–501; that stretch reads SFYWVVLCVVALNTLCVAM. Topologically, residues 502–511 are extracellular; that stretch reads VHYNQPRRLT. A helical transmembrane segment spans residues 512 to 534; it reads TTLYFAEFVFLGLFLTEMSLKMY. Residues 535-544 are Cytoplasmic-facing; the sequence is GLGPRSYFRS. Residue S544 participates in a 1,2-diacyl-sn-glycero-3-phospho-(1D-myo-inositol-4,5-bisphosphate) binding. Residues 545–566 traverse the membrane as a helical segment; sequence SFNCFDFGVIVGSVFEVVWAAI. Residues 567–573 lie on the Extracellular side of the membrane; it reads KPGSSFG. Residues 574–586 form a helical membrane-spanning segment; sequence ISVLRALRLLRIF. A 1,2-diacyl-sn-glycero-3-phospho-(1D-myo-inositol-4,5-bisphosphate) is bound by residues R584 and K587. The Cytoplasmic portion of the chain corresponds to 587 to 604; that stretch reads KVTKYWSSLRNLVVSLLN. Residues 605 to 630 form a helical membrane-spanning segment; sequence SMKSIISLLFLLFLFIVVFALLGMQL. Residues 631–682 lie on the Extracellular side of the membrane; sequence FGGQFNFQDETPTTNFDTFPAAILTVFQILTGEDWNAVMYHGIESQGGVSKG. The helical transmembrane segment at 683–709 threads the bilayer; that stretch reads MFSSFYFIVLTLFGNYTLLNVFLAIAV. At 710–1151 the chain is on the cytoplasmic side; the sequence is DNLANAQELT…FCHYIVTMRY (442 aa). 3 positions are modified to phosphoserine: S745, S748, and S783. Composition is skewed to basic and acidic residues over residues 816 to 826, 857 to 886, 922 to 932, and 965 to 976; these read PLVVELGRDGA, KDKT…EERP, GSPEEAAEREP, and GPREAESGEEPA. 2 disordered regions span residues 816–1038 and 1054–1076; these read PLVV…VTVG and QPED…DPNT. The segment covering 977 to 986 has biased composition (basic residues); the sequence is RRHRARHKAQ. Residues 990–1029 show a composition bias toward basic and acidic residues; the sequence is EAVEKETTEKEATEKEAEIVEADKEKELRNHQPREPHCDL. Residue S1069 is modified to Phosphoserine. The stretch at 1137 to 1419 is one III repeat; it reads NLLRRFCHYI…IFVALIIITF (283 aa). The helical transmembrane segment at 1152-1170 threads the bilayer; that stretch reads FEVVILVVIALSSIALAAE. Topologically, residues 1171–1178 are extracellular; the sequence is DPVRTDSP. Residues 1179–1203 traverse the membrane as a helical segment; it reads RNNALKYLDYIFTGVFTFEMVIKMI. At 1204–1217 the chain is on the cytoplasmic side; sequence DLGLLLHPGAYFRD. A helical transmembrane segment spans residues 1218–1238; sequence LWNILDFIVVSGALVAFAFSG. Residues 1239–1244 lie on the Extracellular side of the membrane; sequence SKGKDI. Residues 1245-1265 form a helical membrane-spanning segment; that stretch reads NTIKSLRVLRVLRPLKTIKRL. Over 1266–1283 the chain is Cytoplasmic; that stretch reads PKLKAVFDCVVNSLKNVL. The chain crosses the membrane as a helical span at residues 1284–1303; the sequence is NILIVYMLFMFIFAVIAVQL. Residues 1304–1390 lie on the Extracellular side of the membrane; the sequence is FKGKFFYCTD…EQGPSPGYRM (87 aa). A helical transmembrane segment spans residues 1391 to 1416; the sequence is ELSIFYVVYFVVFPFFFVNIFVALII. Over 1417–1471 the chain is Cytoplasmic; it reads ITFQEQGDKVMSECSLEKNERACIDFAISAKPLTRYMPQNRQSFQYKTWTFVVSP. The stretch at 1456–1711 is one IV repeat; it reads NRQSFQYKTW…LFVAVIMDNF (256 aa). The helical transmembrane segment at 1472–1490 threads the bilayer; the sequence is PFEYFIMAMIALNTVVLMM. Over 1491 to 1498 the chain is Extracellular; sequence KFYDAPYE. The chain crosses the membrane as a helical span at residues 1499–1523; that stretch reads YELMLKCLNIVFTSMFSMECVLKII. Residues 1524–1533 lie on the Cytoplasmic side of the membrane; sequence AFGVLNYFRD. A helical membrane pass occupies residues 1534-1555; that stretch reads AWNVFDFVTVLGSITDILVTEI. At 1556 to 1563 the chain is on the extracellular side; it reads AETNNFIN. N1563 carries N-linked (GlcNAc...) asparagine glycosylation. A helical transmembrane segment spans residues 1564-1582; that stretch reads LSFLRLFRAARLIKLLRQG. The Cytoplasmic portion of the chain corresponds to 1583–1601; the sequence is YTIRILLWTFVQSFKALPY. Residues 1602-1621 traverse the membrane as a helical segment; the sequence is VCLLIAMLFFIYAIIGMQVF. The Extracellular portion of the chain corresponds to 1622–1683; that stretch reads GNIALDDDTS…ANATECGSDF (62 aa). The N-linked (GlcNAc...) asparagine glycan is linked to N1675. A helical membrane pass occupies residues 1684–1707; sequence AYFYFVSFIFLCSFLMLNLFVAVI. At 1708 to 2339 the chain is on the cytoplasmic side; the sequence is MDNFEYLTRD…YHHPDQDHWC (632 aa). An EF-hand domain is found at 1724–1759; sequence HHLDEFIRVWAEYDPAACGRISYNDMFEMLKHMSPP. Ca(2+)-binding residues include D1737, R1743, and D1748. The segment covering 1916 to 1931 has biased composition (polar residues); it reads SSTSLSNGGAIQNQES. 2 disordered regions span residues 1916–1968 and 1981–2206; these read SSTS…VGRS and TRRG…YKTA. Over residues 1946-1960 the composition is skewed to basic and acidic residues; that stretch reads DAPHEARPPLERGHS. Residues 2049–2063 are compositionally biased toward basic residues; the sequence is SHHHHHRCHRRRDRK. The residue at position 2066 (S2066) is a Phosphoserine. Over residues 2098–2116 the composition is skewed to basic and acidic residues; it reads CRRERERRQERGRSQERRQ. Residues 2143-2153 are compositionally biased toward low complexity; sequence PSLSSHPTSPT. Over residues 2164 to 2180 the composition is skewed to polar residues; sequence GSGSVNGSPLLSTSGAS. 3 positions are modified to phosphoserine: S2224, S2233, and S2256.

The protein belongs to the calcium channel alpha-1 subunit (TC 1.A.1.11) family. CACNA1B subfamily. In terms of assembly, multisubunit complex consisting of alpha-1, alpha-2, beta and delta subunits in a 1:1:1:1 ratio. The channel activity is directed by the pore-forming and voltage-sensitive alpha-1 subunit. In many cases, this subunit is sufficient to generate voltage-sensitive calcium channel activity. The auxiliary subunits beta and alpha-2/delta linked by a disulfide bridge regulate the channel activity. Interacts with RIMS1. Interacts with FMR1 (via C-terminus); this interaction induces a decrease in the number of presynaptic functional CACNA1B channels at the cell surface. In terms of processing, phosphorylated in vitro by CaM-kinase II, PKA, PKC and CGPK. In terms of tissue distribution, isoform Alpha-1b-1 and isoform Alpha-1b-2 are expressed in the central nervous system, but not in skeletal muscle or aorta. Expressed in the cerebral white matter, cortex, hippocampus, basal ganglia, and cerebellum.

It is found in the membrane. The catalysed reaction is Ca(2+)(in) = Ca(2+)(out). Its activity is regulated as follows. Is specifically blocked by omega-conotoxin GVIA. Is specifically blocked by omega-conotoxin MVIIA (ziconotide). Is insensitive to dihydropyridines (DHP). Is specifically blocked by omega-conotoxin MVIIA (ziconotide). Is insensitive to dihydropyridines (DHP). Functionally, voltage-sensitive calcium channels (VSCC) mediate the entry of calcium ions into excitable cells and are also involved in a variety of calcium-dependent processes, including muscle contraction, hormone or neurotransmitter release, gene expression, cell motility, cell division and cell death. This alpha-1B subunit gives rise to N-type calcium currents. N-type calcium channels belong to the 'high-voltage activated' (HVA) group. They are involved in pain signaling. Calcium channels containing alpha-1B subunit may play a role in directed migration of immature neurons. Mediates Ca(2+) release probability at hippocampal neuronal soma and synaptic terminals. Its function is as follows. Voltage-sensitive calcium channels (VSCC) mediate the entry of calcium ions into excitable cells and are also involved in a variety of calcium-dependent processes, including muscle contraction, hormone or neurotransmitter release, gene expression, cell motility, cell division and cell death. This alpha-1B subunit gives rise to N-type calcium currents. The sequence is that of Voltage-dependent N-type calcium channel subunit alpha-1B (CACNA1B) from Homo sapiens (Human).